We begin with the raw amino-acid sequence, 184 residues long: Non-specific lipid transfer protein GPI-anchored 6 (184 aa).

A signal peptide spans 1–24; the sequence is MEKSTRTLFITIVITSMLLGFGNS. Disulfide bonds link C33–C74, C43–C58, C59–C101, and C72–C111. A disordered region spans residues 138–158; it reads NSTSPTQIHKDGTGGGKAEPV. The GPI-anchor amidated serine moiety is linked to residue S160. A propeptide spans 161–184 (removed in mature form); that stretch reads NGWKEKSWLGVELLIYLLVSLIFF.

It belongs to the plant LTP family. Preferentially expressed in the shoot apical meristem and the root meristem. Also present in the ovules and developing embryos. Observed in cotyledons, hypocotyls, flowers, leaves and siliques. Up-regulated in the epidermis of stems.

It localises to the cell membrane. In terms of biological role, lipid transfer protein involved in seed and ovule maturation and development, probably by regulating the fatty acids homeostasis during suberin and sporopollenin biosynthesis or deposition. Contributes to pre-invasive defense against some non-host powdery mildew pathogens by preventing the penetration of the epidermal cell wall by the fungal agents (e.g. Blumeria graminis f. sp. hordei (Bgh)). The polypeptide is Non-specific lipid transfer protein GPI-anchored 6 (Arabidopsis thaliana (Mouse-ear cress)).